Reading from the N-terminus, the 176-residue chain is Ribosome maturation factor RimM (176 aa).

In terms of domain architecture, PRC barrel spans 101 to 174 (EGHYYIYQLL…EIRVELPPGL (74 aa)).

It belongs to the RimM family. In terms of assembly, binds ribosomal protein uS19.

The protein localises to the cytoplasm. In terms of biological role, an accessory protein needed during the final step in the assembly of 30S ribosomal subunit, possibly for assembly of the head region. Essential for efficient processing of 16S rRNA. May be needed both before and after RbfA during the maturation of 16S rRNA. It has affinity for free ribosomal 30S subunits but not for 70S ribosomes. The polypeptide is Ribosome maturation factor RimM (Moorella thermoacetica (strain ATCC 39073 / JCM 9320)).